The chain runs to 502 residues: Bifunctional purine biosynthesis protein PurH (502 aa).

An MGS-like domain is found at 1–144 (MKKRALISVF…KNFQDVVVIS (144 aa)).

It belongs to the PurH family.

It carries out the reaction (6R)-10-formyltetrahydrofolate + 5-amino-1-(5-phospho-beta-D-ribosyl)imidazole-4-carboxamide = 5-formamido-1-(5-phospho-D-ribosyl)imidazole-4-carboxamide + (6S)-5,6,7,8-tetrahydrofolate. The enzyme catalyses IMP + H2O = 5-formamido-1-(5-phospho-D-ribosyl)imidazole-4-carboxamide. It participates in purine metabolism; IMP biosynthesis via de novo pathway; 5-formamido-1-(5-phospho-D-ribosyl)imidazole-4-carboxamide from 5-amino-1-(5-phospho-D-ribosyl)imidazole-4-carboxamide (10-formyl THF route): step 1/1. The protein operates within purine metabolism; IMP biosynthesis via de novo pathway; IMP from 5-formamido-1-(5-phospho-D-ribosyl)imidazole-4-carboxamide: step 1/1. The chain is Bifunctional purine biosynthesis protein PurH from Clostridium beijerinckii (strain ATCC 51743 / NCIMB 8052) (Clostridium acetobutylicum).